Consider the following 335-residue polypeptide: Phosphate acyltransferase (335 aa).

Belongs to the PlsX family. Homodimer. Probably interacts with PlsY.

It localises to the cytoplasm. It catalyses the reaction a fatty acyl-[ACP] + phosphate = an acyl phosphate + holo-[ACP]. It functions in the pathway lipid metabolism; phospholipid metabolism. Functionally, catalyzes the reversible formation of acyl-phosphate (acyl-PO(4)) from acyl-[acyl-carrier-protein] (acyl-ACP). This enzyme utilizes acyl-ACP as fatty acyl donor, but not acyl-CoA. In Brevibacillus brevis (strain 47 / JCM 6285 / NBRC 100599), this protein is Phosphate acyltransferase.